Consider the following 118-residue polypeptide: Small ribosomal subunit protein uS13 (118 aa).

The interval arginine 93–lysine 118 is disordered.

It belongs to the universal ribosomal protein uS13 family. Part of the 30S ribosomal subunit. Forms a loose heterodimer with protein S19. Forms two bridges to the 50S subunit in the 70S ribosome.

Located at the top of the head of the 30S subunit, it contacts several helices of the 16S rRNA. In the 70S ribosome it contacts the 23S rRNA (bridge B1a) and protein L5 of the 50S subunit (bridge B1b), connecting the 2 subunits; these bridges are implicated in subunit movement. Contacts the tRNAs in the A and P-sites. The protein is Small ribosomal subunit protein uS13 of Pseudomonas fluorescens (strain ATCC BAA-477 / NRRL B-23932 / Pf-5).